A 391-amino-acid polypeptide reads, in one-letter code: 1-deoxy-D-xylulose 5-phosphate reductoisomerase (391 aa).

NADPH is bound by residues threonine 11, glycine 12, serine 13, isoleucine 14, glycine 37, asparagine 39, and asparagine 125. Lysine 126 lines the 1-deoxy-D-xylulose 5-phosphate pocket. Glutamate 127 contributes to the NADPH binding site. Residue aspartate 151 coordinates Mn(2+). Residues serine 152, glutamate 153, serine 176, and histidine 199 each coordinate 1-deoxy-D-xylulose 5-phosphate. Residue glutamate 153 coordinates Mn(2+). Glycine 205 serves as a coordination point for NADPH. 4 residues coordinate 1-deoxy-D-xylulose 5-phosphate: serine 212, asparagine 217, lysine 218, and glutamate 221. Glutamate 221 provides a ligand contact to Mn(2+).

Belongs to the DXR family. It depends on Mg(2+) as a cofactor. The cofactor is Mn(2+).

It catalyses the reaction 2-C-methyl-D-erythritol 4-phosphate + NADP(+) = 1-deoxy-D-xylulose 5-phosphate + NADPH + H(+). The protein operates within isoprenoid biosynthesis; isopentenyl diphosphate biosynthesis via DXP pathway; isopentenyl diphosphate from 1-deoxy-D-xylulose 5-phosphate: step 1/6. Its function is as follows. Catalyzes the NADPH-dependent rearrangement and reduction of 1-deoxy-D-xylulose-5-phosphate (DXP) to 2-C-methyl-D-erythritol 4-phosphate (MEP). The chain is 1-deoxy-D-xylulose 5-phosphate reductoisomerase from Heliobacterium modesticaldum (strain ATCC 51547 / Ice1).